The sequence spans 262 residues: Tropinone reductase homolog At2g30670 (262 aa).

13–37 contributes to the NADP(+) binding site; the sequence is LVTGGASGIGHAIVEELAGLGARIY. Ser146 is a substrate binding site. Tyr159 (proton acceptor) is an active-site residue.

It belongs to the short-chain dehydrogenases/reductases (SDR) family. SDR65C subfamily.

The sequence is that of Tropinone reductase homolog At2g30670 from Arabidopsis thaliana (Mouse-ear cress).